The following is a 93-amino-acid chain: Small ribosomal subunit protein uS19 (93 aa).

Belongs to the universal ribosomal protein uS19 family.

In terms of biological role, protein S19 forms a complex with S13 that binds strongly to the 16S ribosomal RNA. The protein is Small ribosomal subunit protein uS19 of Geotalea uraniireducens (strain Rf4) (Geobacter uraniireducens).